A 456-amino-acid chain; its full sequence is Histidine--tRNA ligase (456 aa).

The protein belongs to the class-II aminoacyl-tRNA synthetase family. Homodimer.

It localises to the cytoplasm. The enzyme catalyses tRNA(His) + L-histidine + ATP = L-histidyl-tRNA(His) + AMP + diphosphate + H(+). This Borreliella burgdorferi (strain ATCC 35210 / DSM 4680 / CIP 102532 / B31) (Borrelia burgdorferi) protein is Histidine--tRNA ligase (hisS).